Reading from the N-terminus, the 179-residue chain is Inosine/xanthosine triphosphatase (179 aa).

Residue Glu-71 coordinates Mg(2+). 71–72 (EA) is a binding site for substrate.

The protein belongs to the YjjX NTPase family. In terms of assembly, homodimer. It depends on Mg(2+) as a cofactor. Mn(2+) serves as cofactor.

The enzyme catalyses XTP + H2O = XDP + phosphate + H(+). The catalysed reaction is ITP + H2O = IDP + phosphate + H(+). Its function is as follows. Phosphatase that hydrolyzes non-canonical purine nucleotides such as XTP and ITP to their respective diphosphate derivatives. Probably excludes non-canonical purines from DNA/RNA precursor pool, thus preventing their incorporation into DNA/RNA and avoiding chromosomal lesions. The sequence is that of Inosine/xanthosine triphosphatase from Shewanella sp. (strain ANA-3).